We begin with the raw amino-acid sequence, 652 residues long: MKKRIRELTDLLNQYRQEYYTNDAPSVSDSEYDKLYRELVELEQTYPAYILKDSPTQLVGSTILTGFQKYQHQYPLFSLQDAFSREELNAFDQRIKSAFPEAEYLAELKIDGLSISLVYEAGVLKVGATRGDGTIGENITENIKNIKDIPKRLSQALDVTIRGEAYMSRQAFKTINEERQENGEPEFANPRNAAAGTLRQLDTRIVAKRQLATFLYQEVGLETADSQQKTLERLADLGFSVNSHYLLSSSMNDIWDFIQSIEASREELPYEIDGVVVKVNQLAIQEELGFTVKAPRWAIAYKFPAEEKEAEIVSVDWTVGRTGVVTPTANLTPVQLAGTTVSRATLHNVDYIAEKDIRIGDTVVVYKAGDIIPAVLRVVEAKRRDQAPMPIPTACPSCQSQLVHFEDEVALRCINPLCPSLVQRSLEHFASRQAMNIAGLGPAVVEKLYSAGLVHDVADIYRLSLEDLLTLDGIKEKSAEKLLAAIEQSKANSAEKLLFGLGIRHIGAKASRLILEAYGDLEALLAVTAEELAQIDGLGLVIGQSLVQYFQQEQAAQLLAELKSAGVNLAYLGQRPDQQAALFGLTVVLTGKLEKLNRTQAMEKLEQLGAKVTGSVSKKTDLVVAGSEAGSKLAKAQQLGIRIEDEDWLLNL.

NAD(+) is bound by residues 29–33, 78–79, and Glu107; these read DSEYD and SL. Lys109 acts as the N6-AMP-lysine intermediate in catalysis. NAD(+) is bound by residues Arg130, Glu164, Lys278, and Lys302. 4 residues coordinate Zn(2+): Cys395, Cys398, Cys413, and Cys418. Positions 577-652 constitute a BRCT domain; sequence DQQAALFGLT…IEDEDWLLNL (76 aa).

It belongs to the NAD-dependent DNA ligase family. LigA subfamily. It depends on Mg(2+) as a cofactor. Mn(2+) serves as cofactor.

It catalyses the reaction NAD(+) + (deoxyribonucleotide)n-3'-hydroxyl + 5'-phospho-(deoxyribonucleotide)m = (deoxyribonucleotide)n+m + AMP + beta-nicotinamide D-nucleotide.. In terms of biological role, DNA ligase that catalyzes the formation of phosphodiester linkages between 5'-phosphoryl and 3'-hydroxyl groups in double-stranded DNA using NAD as a coenzyme and as the energy source for the reaction. It is essential for DNA replication and repair of damaged DNA. In Streptococcus equi subsp. equi (strain 4047), this protein is DNA ligase.